Here is a 408-residue protein sequence, read N- to C-terminus: Argininosuccinate synthase (408 aa).

ATP is bound by residues 11–19 (AYSGGLDTS) and Ala-38. L-citrulline-binding residues include Tyr-91 and Ser-96. ATP is bound at residue Gly-121. L-aspartate contacts are provided by Thr-123, Asn-127, and Asp-128. Asn-127 is an L-citrulline binding site. Positions 131, 182, 191, 267, and 279 each coordinate L-citrulline.

It belongs to the argininosuccinate synthase family. Type 1 subfamily. In terms of assembly, homotetramer.

It is found in the cytoplasm. The catalysed reaction is L-citrulline + L-aspartate + ATP = 2-(N(omega)-L-arginino)succinate + AMP + diphosphate + H(+). It participates in amino-acid biosynthesis; L-arginine biosynthesis; L-arginine from L-ornithine and carbamoyl phosphate: step 2/3. The chain is Argininosuccinate synthase from Paracoccus denitrificans (strain Pd 1222).